The chain runs to 870 residues: MGNRGMEELIPLVNKLQDAFSSIGQSCHLDLPQIAVVGGQSAGKSSVLENFVGRDFLPRGSGIVTRRPLILQLIFSKTEHAEFLHCKSKKFTDFDEVRQEIEAETDRVTGTNKGISPVPINLRVYSPHVLNLTLIDLPGITKVPVGDQPPDIEYQIKDMILQFISRESSLILAVTPANMDLANSDALKLAKEVDPQGLRTIGVITKLDLMDEGTDARDVLENKLLPLRRGYIGVVNRSQKDIEGKKDIRAALAAERKFFLSHPAYRHMADRMGTPHLQKTLNQQLTNHIRESLPALRSKLQSQLLSLEKEVEEYKNFRPDDPTRKTKALLQMVQQFGVDFEKRIEGSGDQVDTLELSGGARINRIFHERFPFELVKMEFDEKDLRREISYAIKNIHGVRTGLFTPDLAFEAIVKKQVVKLKEPCLKCVDLVIQELINTVRQCTSKLSSYPRLREETERIVTTYIREREGRTKDQILLLIDIEQSYINTNHEDFIGFANAQQRSTQLNKKRAIPNQGEILVIRRGWLTINNISLMKGGSKEYWFVLTAESLSWYKDEEEKEKKYMLPLDNLKIRDVEKGFMSNKHVFAIFNTEQRNVYKDLRQIELACDSQEDVDSWKASFLRAGVYPEKDQAENEDGAQENTFSMDPQLERQVETIRNLVDSYVAIINKSIRDLMPKTIMHLMINNTKAFIHHELLAYLYSSADQSSLMEESADQAQRRDDMLRMYHALKEALNIIGDISTSTVSTPVPPPVDDTWLQSASSHSPTPQRRPVSSIHPPGRPPAVRGPTPGPPLIPVPVGAAASFSAPPIPSRPGPQSVFANSDLFPAPPQIPSRPVRIPPGIPPGVPSRRPPAAPSRPTIIRPAEPSLLD.

Positions H28–P294 constitute a Dynamin-type G domain. The G1 motif stretch occupies residues G38–S45. GDP contacts are provided by S41, G43, K44, S45, S46, R59, and G60. The tract at residues V64–R66 is G2 motif. Positions D136 to G139 are G3 motif. Residues T205 to D208 form a G4 motif region. Residues K206, D208, and D211 each coordinate GDP. Y231 is modified (phosphotyrosine; by SRC). The tract at residues V235 to S238 is G5 motif. Residues N236, R237, and Q239 each contribute to the GDP site. Position 299 is an N6-acetyllysine (K299). Positions L519–V625 constitute a PH domain. Residue Y597 is modified to Phosphotyrosine; by SRC. K598 is modified (N6-acetyllysine). Positions V653–V744 constitute a GED domain. The segment at T741–D870 is disordered. T755 is modified (phosphothreonine). The segment covering W756–P767 has biased composition (polar residues). A Phosphoserine; by CDK1 modification is found at S764. Over residues V796–A806 the composition is skewed to low complexity. The span at P826–P855 shows a compositional bias: pro residues. S848 bears the Phosphoserine; by GSK3-alpha mark.

This sequence belongs to the TRAFAC class dynamin-like GTPase superfamily. Dynamin/Fzo/YdjA family. Oligomerizes into a helical polymer that self-assembles around the vesicle membrane, when associated to the menbrane through lipid binding. Interacts with SHANK1 and SHANK2. Interacts with SNX9. Interacts (via C-terminal proline-rich domain (PRD)) with SNX18 (via SH3 domain); this interaction regulates ATG9A and ATG16L1 trafficking from recycling endosomes to sites of autophagosome formation. Interacts with SNX33 (via SH3 domain). Interacts with MYO1E (via SH3 domain). Interacts with PSTPIP1 (via SH3 domain). Interacts with CTNND2. Interacts (via C-terminal proline-rich domain (PRD)) with BIN1 (via SH3 domain); this interaction allows the recruitment of DNM2 to the membrane tubules and inhibits self-assembly-stimulated GTPase activity on the membrane. Interacts with GABARAP, GABARAPL1 and GABARAPL2. Interacts with MAP1LC3B (the lipidate and non-lipidated LC3 form); this interaction mediates recycling endosome scission leading to autophagosome release. Interacts with ITSN1. Interacts (via C-terminal proline-rich domain (PRD)) with SH3BP4 (via SH3 domain); this interaction controls the GTPase activity and is prevented by EGFR-induced tyrosine phosphorylation of either DNM2 or SH3BP4. May interact with PIK3C3. May be a component of a complex composed of RAB5A (in GDP-bound form), DYN2 and PIK3C3. Interacts with SDC4; this interaction is markedly enhanced at focal ahesion site upon induction of focal adhesions and stress-fiber formation. Interacts with ACTN1. Interacts with CTTN; this interaction stimulates the intrinsic GTPase activity of DNM2 and stabilizes the association of DNM2 and actin filaments; in addition this interaction is stimulated by ligand binding to the receptor, leading to the recruitment of the DNM2-CTTN complex to the sequestered receptor-ligand complex to its internalization. Interacts with NOSTRIN (via SH3 domain); this interaction allows the recruitment of NOS3 to dynamin-positive structures. Interacts with TUBG1; this interaction may participate in centrosome cohesion. Phosphorylation at Ser-848 by GSK3-alpha relieves the inhibition of BIN1 and promotes endocytosis. Phosphorylation at Ser-764 by CDK1 is greatly increased upon mitotic entry. It regulates cytokinesis downstream of calcineurin, and does not affect clathrin-mediated endocytosis. Dephosphorylated by calcineurin/PP2 during cytokinesis in a Ca(2+)- and calmodulin-dependent manner. Phosphorylated on tyrosine residues by EGFR and after activation of SRC. Widely expressed. Expressed in skeletal muscle and the peripheral nerve.

It localises to the cytoplasm. Its subcellular location is the cytoskeleton. The protein resides in the cytoplasmic vesicle. It is found in the clathrin-coated vesicle. The protein localises to the cell projection. It localises to the uropodium. Its subcellular location is the endosome. The protein resides in the microtubule organizing center. It is found in the centrosome. The protein localises to the centriole. It localises to the recycling endosome. Its subcellular location is the phagocytic cup. The protein resides in the phagosome membrane. It is found in the podosome. The protein localises to the cell junction. It localises to the postsynaptic density. Its subcellular location is the synapse. The protein resides in the synaptosome. It is found in the midbody. The protein localises to the membrane. It localises to the clathrin-coated pit. The catalysed reaction is GTP + H2O = GDP + phosphate + H(+). In terms of biological role, catalyzes the hydrolysis of GTP and utilizes this energy to mediate vesicle scission at plasma membrane during endocytosis and filament remodeling at many actin structures during organization of the actin cytoskeleton. Plays an important role in vesicular trafficking processes, namely clathrin-mediated endocytosis (CME), exocytic and clathrin-coated vesicle from the trans-Golgi network, and PDGF stimulated macropinocytosis. During vesicular trafficking process, associates to the membrane, through lipid binding, and self-assembles into ring-like structure through oligomerization to form a helical polymer around the vesicle membrane and leading to vesicle scission. Plays a role in organization of the actin cytoskeleton by mediating arrangement of stress fibers and actin bundles in podocytes. During organization of the actin cytoskeleton, self-assembles into ring-like structure that directly bundles actin filaments to form typical membrane tubules decorated with dynamin spiral polymers. Self-assembly increases GTPase activity and the GTP hydrolysis causes the rapid depolymerization of dynamin spiral polymers, and results in dispersion of actin bundles. Remodels, through its interaction with CTTN, bundled actin filaments in a GTPase-dependent manner and plays a role in orchestrating the global actomyosin cytoskeleton. The interaction with CTTN stabilizes the interaction of DNM2 and actin filaments and stimulates the intrinsic GTPase activity that results in actin filament-barbed ends and increases the sensitivity of filaments in bundles to the actin depolymerizing factor, CFL1. Plays a role in the autophagy process, by participating in the formation of ATG9A vesicles destined for the autophagosomes through its interaction with SNX18, by mediating recycling endosome scission leading to autophagosome release through MAP1LC3B interaction. Also regulates maturation of apoptotic cell corpse-containing phagosomes by recruiting PIK3C3 to the phagosome membrane. Also plays a role in cytokinesis. May participate in centrosome cohesion through its interaction with TUBG1. Plays a role in the regulation of neuron morphology, axon growth and formation of neuronal growth cones. Involved in membrane tubulation. The polypeptide is Dynamin-2 (Homo sapiens (Human)).